A 308-amino-acid chain; its full sequence is ADP-L-glycero-D-manno-heptose-6-epimerase (308 aa).

NADP(+) is bound by residues 10–11 (FI), 31–32 (DN), lysine 38, lysine 53, 75–79 (EGACS), and asparagine 92. Residue tyrosine 139 is the Proton acceptor of the active site. Lysine 143 contacts NADP(+). Asparagine 168 is a substrate binding site. Residues valine 169 and lysine 177 each contribute to the NADP(+) site. Lysine 177 serves as the catalytic Proton acceptor. Substrate is bound by residues serine 179, histidine 186, 200–203 (FAGS), arginine 208, and tyrosine 271.

Belongs to the NAD(P)-dependent epimerase/dehydratase family. HldD subfamily. As to quaternary structure, homopentamer. NADP(+) serves as cofactor.

The catalysed reaction is ADP-D-glycero-beta-D-manno-heptose = ADP-L-glycero-beta-D-manno-heptose. The protein operates within nucleotide-sugar biosynthesis; ADP-L-glycero-beta-D-manno-heptose biosynthesis; ADP-L-glycero-beta-D-manno-heptose from D-glycero-beta-D-manno-heptose 7-phosphate: step 4/4. In terms of biological role, catalyzes the interconversion between ADP-D-glycero-beta-D-manno-heptose and ADP-L-glycero-beta-D-manno-heptose via an epimerization at carbon 6 of the heptose. This chain is ADP-L-glycero-D-manno-heptose-6-epimerase, found in Haemophilus influenzae (strain 86-028NP).